The primary structure comprises 438 residues: Metacaspase-1B (438 aa).

The disordered stretch occupies residues 1-125 (MYYHHSHQGW…SQHFGRGAPS (125 aa)). The segment covering 29 to 38 (PYPYSSNAQY) has biased composition (low complexity). Pro residues predominate over residues 39–74 (QPPPGPPPTSHYAPPPGPPPSHYYPPPGSYPSPAPS). Residues H222 and C278 contribute to the active site.

This sequence belongs to the peptidase C14B family.

Functionally, involved in cell death (apoptosis). The chain is Metacaspase-1B (casB) from Aspergillus niger (strain ATCC MYA-4892 / CBS 513.88 / FGSC A1513).